A 103-amino-acid chain; its full sequence is Phosphoribosyl-ATP pyrophosphatase (103 aa).

Positions 79 to 103 (SVQAELERREGKLSTTRDRKEIDEL) are disordered. Positions 83 to 103 (ELERREGKLSTTRDRKEIDEL) are enriched in basic and acidic residues.

The protein belongs to the PRA-PH family.

It is found in the cytoplasm. It carries out the reaction 1-(5-phospho-beta-D-ribosyl)-ATP + H2O = 1-(5-phospho-beta-D-ribosyl)-5'-AMP + diphosphate + H(+). It participates in amino-acid biosynthesis; L-histidine biosynthesis; L-histidine from 5-phospho-alpha-D-ribose 1-diphosphate: step 2/9. The polypeptide is Phosphoribosyl-ATP pyrophosphatase (Listeria welshimeri serovar 6b (strain ATCC 35897 / DSM 20650 / CCUG 15529 / CIP 8149 / NCTC 11857 / SLCC 5334 / V8)).